Reading from the N-terminus, the 382-residue chain is Protein MSN1 (382 aa).

The tract at residues leucine 12 to leucine 26 is leucine-zipper. 2 stretches are compositionally biased toward polar residues: residues threonine 104–threonine 114 and asparagine 122–asparagine 138. Disordered regions lie at residues threonine 104 to asparagine 138 and asparagine 155 to glutamine 260. Over residues serine 162–asparagine 180 the composition is skewed to low complexity. Composition is skewed to polar residues over residues proline 181–valine 198 and asparagine 207–isoleucine 221. The span at serine 222–serine 231 shows a compositional bias: low complexity. Over residues proline 232–valine 253 the composition is skewed to polar residues. The short motif at glycine 266–arginine 271 is the Nuclear localization signal element.

The protein localises to the nucleus. May function as a transcriptional activator. Increased dosage of MSN1 restores invertase expression in yeast mutants defective in the SNF1 protein kinase, and msn1 disruption reduced derepression of invertase in the wild-type. May affect SUC2 expression. Expression of MSN1 enhances growth in iron-limiting conditions. The chain is Protein MSN1 (MSN1) from Saccharomyces cerevisiae (strain ATCC 204508 / S288c) (Baker's yeast).